Reading from the N-terminus, the 649-residue chain is Ubiquitin-associated and SH3 domain-containing protein B (649 aa).

S20 carries the post-translational modification Phosphoserine. T23 carries the post-translational modification Phosphothreonine. In terms of domain architecture, UBA spans 27-76; it reads NRQQRPGTIKHGSALDVLLSMGFPRARAQKALASTGGRSVQAACDWLFSH. The SH3 domain occupies 254-319; that stretch reads ANHETLQVIY…PENYITKADE (66 aa). The protein tyrosine phosphatase stretch occupies residues 380–649; the sequence is GPQKRCLFVC…FNWRETLLQE (270 aa). The active site involves R390. H391 serves as the catalytic Tele-phosphohistidine intermediate. Residue H576 is part of the active site.

In terms of assembly, homodimer. Interacts with JAK2 (in vitro). Interacts with CBL. Part of a complex containing CBL and activated EGFR. Interacts with ubiquitin and with mono-ubiquitinated proteins. Interacts with ZAP70 (ubiquitinated form).

It localises to the cytoplasm. The protein resides in the nucleus. It catalyses the reaction O-phospho-L-tyrosyl-[protein] + H2O = L-tyrosyl-[protein] + phosphate. In terms of biological role, interferes with CBL-mediated down-regulation and degradation of receptor-type tyrosine kinases. Promotes accumulation of activated target receptors, such as T-cell receptors and EGFR, on the cell surface. Exhibits tyrosine phosphatase activity toward several substrates including EGFR, FAK, SYK, and ZAP70. Down-regulates proteins that are dually modified by both protein tyrosine phosphorylation and ubiquitination. This Homo sapiens (Human) protein is Ubiquitin-associated and SH3 domain-containing protein B (UBASH3B).